The following is a 343-amino-acid chain: Uroporphyrinogen decarboxylase (343 aa).

Substrate-binding positions include R23 to R27, F42, D73, Y150, S205, and H322.

The protein belongs to the uroporphyrinogen decarboxylase family. Homodimer.

It is found in the cytoplasm. The catalysed reaction is uroporphyrinogen III + 4 H(+) = coproporphyrinogen III + 4 CO2. It participates in porphyrin-containing compound metabolism; protoporphyrin-IX biosynthesis; coproporphyrinogen-III from 5-aminolevulinate: step 4/4. Inhibited by N-ethyl-maleimide and phenylglyoxal. Catalyzes the decarboxylation of four acetate groups of uroporphyrinogen-III to yield coproporphyrinogen-III. This chain is Uroporphyrinogen decarboxylase (hemE), found in Cereibacter sphaeroides (strain ATCC 17023 / DSM 158 / JCM 6121 / CCUG 31486 / LMG 2827 / NBRC 12203 / NCIMB 8253 / ATH 2.4.1.) (Rhodobacter sphaeroides).